The primary structure comprises 97 residues: UPF0298 protein MGAS9429_Spy0329 (97 aa).

This sequence belongs to the UPF0298 family.

It localises to the cytoplasm. The sequence is that of UPF0298 protein MGAS9429_Spy0329 from Streptococcus pyogenes serotype M12 (strain MGAS9429).